The primary structure comprises 1377 residues: DNA-directed RNA polymerase subunit beta (1377 aa).

It belongs to the RNA polymerase beta chain family. The RNAP catalytic core consists of 2 alpha, 1 beta, 1 beta' and 1 omega subunit. When a sigma factor is associated with the core the holoenzyme is formed, which can initiate transcription.

It carries out the reaction RNA(n) + a ribonucleoside 5'-triphosphate = RNA(n+1) + diphosphate. DNA-dependent RNA polymerase catalyzes the transcription of DNA into RNA using the four ribonucleoside triphosphates as substrates. The protein is DNA-directed RNA polymerase subunit beta of Orientia tsutsugamushi (strain Boryong) (Rickettsia tsutsugamushi).